A 97-amino-acid chain; its full sequence is UPF0235 protein APL_1380 (97 aa).

This sequence belongs to the UPF0235 family.

The protein is UPF0235 protein APL_1380 of Actinobacillus pleuropneumoniae serotype 5b (strain L20).